The primary structure comprises 66 residues: NSAHPCCDPVTCQPKKGEHCISGPCCRNCKFLNSGTVCKRAVGDDMDDYCSGITTDCPRNPYKGKD.

Residues Asn1 to Lys65 enclose the Disintegrin domain. Intrachain disulfides connect Cys6–Cys29, Cys20–Cys26, Cys25–Cys50, and Cys38–Cys57. The Cell attachment site; atypical (VGD) signature appears at Val42–Asp44.

It belongs to the disintegrin family. Dimeric disintegrin subfamily. Heterodimer with EO4A or EO5A; disulfide-linked. As to expression, expressed by the venom gland.

The protein resides in the secreted. In terms of biological role, poor inhibitor of platelet aggregation. When it dimerizes with EO4A, it inhibits the adhesion of cells expressing the RGD-dependent integrin alpha-5/beta-1 (ITGA5/ITGB1) to immobilized fibronectin. When it dimerizes with EO5A, it inhibits the adhesion of the alpha-4/beta-1 (ITGA4/ITGB1) integrin to VCAM-1. When it dimerizes either with EO4A or EO5A, the inhibition on alpha-IIb/beta-3 (ITGA2B/ITGB3) is low. In Echis ocellatus (Ocellated saw-scaled viper), this protein is Disintegrin EO5B.